A 213-amino-acid polypeptide reads, in one-letter code: Orotate phosphoribosyltransferase (213 aa).

Residue Lys26 participates in 5-phospho-alpha-D-ribose 1-diphosphate binding. Residue 34-35 (FF) coordinates orotate. Residues 72–73 (YK), Arg99, Lys100, Lys103, His105, and 124–132 (DDVITAGTA) contribute to the 5-phospho-alpha-D-ribose 1-diphosphate site. Orotate-binding residues include Thr128 and Arg156.

It belongs to the purine/pyrimidine phosphoribosyltransferase family. PyrE subfamily. Homodimer. Mg(2+) is required as a cofactor.

It carries out the reaction orotidine 5'-phosphate + diphosphate = orotate + 5-phospho-alpha-D-ribose 1-diphosphate. It functions in the pathway pyrimidine metabolism; UMP biosynthesis via de novo pathway; UMP from orotate: step 1/2. In terms of biological role, catalyzes the transfer of a ribosyl phosphate group from 5-phosphoribose 1-diphosphate to orotate, leading to the formation of orotidine monophosphate (OMP). The polypeptide is Orotate phosphoribosyltransferase (Salmonella arizonae (strain ATCC BAA-731 / CDC346-86 / RSK2980)).